Consider the following 245-residue polypeptide: 14-3-3 protein zeta/delta (245 aa).

Position 1 is an N-acetylmethionine (methionine 1). At lysine 3 the chain carries N6-acetyllysine. Phosphoserine; by PKA is present on serine 58. Residue lysine 68 is modified to N6-acetyllysine. A phosphoserine mark is found at serine 184, serine 207, and serine 210. At threonine 232 the chain carries Phosphothreonine; by CK1.

It belongs to the 14-3-3 family. As to quaternary structure, homodimer. Heterodimerizes with YWHAE. Homo- and heterodimerization is inhibited by phosphorylation on Ser-58. Interacts with FOXO4, NOXA1, SSH1 and ARHGEF2. Interacts with CDK16 and with WEE1 (C-terminal). Interacts with MLF1 (phosphorylated form); the interaction retains it in the cytoplasm. Interacts with BSPRY. Interacts with Thr-phosphorylated ITGB2. Interacts with Pseudomonas aeruginosa exoS (unphosphorylated form). Interacts with BAX; the interaction occurs in the cytoplasm. Under stress conditions, MAPK8-mediated phosphorylation releases BAX to mitochondria. Interacts with phosphorylated RAF1; the interaction is inhibited when YWHAZ is phosphorylated on Thr-232. Interacts with TP53; the interaction enhances p53 transcriptional activity. The Ser-58 phosphorylated form inhibits this interaction and p53 transcriptional activity. Interacts with ABL1 (phosphorylated form); the interaction retains ABL1 in the cytoplasm. Interacts with PKA-phosphorylated AANAT; the interaction modulates AANAT enzymatic activity by increasing affinity for arylalkylamines and acetyl-CoA and protecting the enzyme from dephosphorylation and proteasomal degradation. It may also prevent thiol-dependent inactivation. Interacts with AKT1; the interaction phosphorylates YWHAZ and modulates dimerization. Interacts with GAB2. Interacts with SAMSN1. Interacts with BCL2L11 and TLK2. Interacts with the 'Thr-369' phosphorylated form of DAPK2. Interacts with PI4KB, TBC1D22A and TBC1D22B. Interacts with ZFP36L1 (via phosphorylated form); this interaction occurs in a p38 MAPK- and AKT-signaling pathways. Interacts with SLITRK1. Interacts with AK5, LDB1, MADD, PDE1A and SMARCB1. Interacts with ARHGEF7 and GIT1. Interacts with MEFV. Interacts with ADAM22 (via C-terminus). The delta, brain-specific form differs from the zeta form in being phosphorylated. Phosphorylation on Ser-184 by MAPK8; promotes dissociation of BAX and translocation of BAX to mitochondria. Phosphorylation on Thr-232; inhibits binding of RAF1. Phosphorylated on Ser-58 by PKA and protein kinase C delta type catalytic subunit in a sphingosine-dependent fashion. Phosphorylation on Ser-58 by PKA; disrupts homodimerization and heterodimerization with YHAE and TP53.

The protein localises to the cytoplasm. It localises to the melanosome. Its function is as follows. Adapter protein implicated in the regulation of a large spectrum of both general and specialized signaling pathways. Binds to a large number of partners, usually by recognition of a phosphoserine or phosphothreonine motif. Binding generally results in the modulation of the activity of the binding partner. Promotes cytosolic retention and inactivation of TFEB transcription factor by binding to phosphorylated TFEB. Induces ARHGEF7 activity on RAC1 as well as lamellipodia and membrane ruffle formation. In neurons, regulates spine maturation through the modulation of ARHGEF7 activity. The sequence is that of 14-3-3 protein zeta/delta (Ywhaz) from Mus musculus (Mouse).